A 952-amino-acid chain; its full sequence is Chaperone protein ClpC2, chloroplastic (952 aa).

The transit peptide at 1 to 45 (MAWSIALLTPPFFGPGRHVQAKEYREPRGCVMKMSSLKAPVLRIQ) directs the protein to the chloroplast. A Clp R domain is found at 115–257 (FERFTEKAIK…RTQVIRMVGE (143 aa)). 2 repeat regions span residues 118-183 (FTEK…IGRG) and 193-257 (FTPR…MVGE). The segment at 278-525 (LEEYGTNLTK…RVRLRHAQLP (248 aa)) is i. 323 to 330 (GEPGVGKT) contributes to the ATP binding site. The UVR domain maps to 532–567 (EKQLRQITKEKNEAVRSQDFEMAGSHRDREIELKAE). Residues 592–783 (VTESDIQHIV…LLIMTSNVGS (192 aa)) are II. 666–673 (GPTGVGKS) is a binding site for ATP.

It belongs to the ClpA/ClpB family. ClpC subfamily. As to quaternary structure, homodimer and homohexamer. Hexamerization upon addition of ATP. Interacts with CLPT1. Interacts with CLPS1. Stably associated with the import machinery. Interacts with CLPF. The cofactor is Mg(2+). In terms of tissue distribution, expressed at low levels in roots and inflorescences. Expressed at very low levels in rosette leaves. Expressed in photosynthetic green tissues with high levels in young, developing leaf tissues.

It is found in the plastid. The protein resides in the chloroplast stroma. It localises to the chloroplast membrane. The catalysed reaction is ATP + H2O = ADP + phosphate + H(+). Its function is as follows. Molecular chaperone. May act as a suppressor of FtsH-mediated thylakoid membrane biogenesis and may enhance photoinhibition. Seems not involved in chloroplastic protein import. Probable component of the TIC-associated stromal import motor involved in inner membrane translocation. Has an ATPase activity, but no ADPase activity. Interacts with transit peptides with a positional preference. Localization of the signal sequence at the N-terminal end of a protein seems mandatory for interaction to take place. The protein is Chaperone protein ClpC2, chloroplastic of Arabidopsis thaliana (Mouse-ear cress).